The following is a 501-amino-acid chain: Ribose import ATP-binding protein RbsA (501 aa).

ABC transporter domains follow at residues Leu8–Thr245 and Val255–Asn500. Gly40–Ser47 is a binding site for ATP.

Belongs to the ABC transporter superfamily. Ribose importer (TC 3.A.1.2.1) family. As to quaternary structure, the complex is composed of an ATP-binding protein (RbsA), two transmembrane proteins (RbsC) and a solute-binding protein (RbsB).

The protein localises to the cell membrane. The catalysed reaction is D-ribose(out) + ATP + H2O = D-ribose(in) + ADP + phosphate + H(+). Its function is as follows. Part of the ABC transporter complex RbsABC involved in ribose import. Responsible for energy coupling to the transport system. The polypeptide is Ribose import ATP-binding protein RbsA (Clostridium perfringens (strain SM101 / Type A)).